The chain runs to 147 residues: Prefoldin subunit alpha (147 aa).

This sequence belongs to the prefoldin alpha subunit family. In terms of assembly, heterohexamer of two alpha and four beta subunits.

It is found in the cytoplasm. In terms of biological role, molecular chaperone capable of stabilizing a range of proteins. Seems to fulfill an ATP-independent, HSP70-like function in archaeal de novo protein folding. In Thermococcus onnurineus (strain NA1), this protein is Prefoldin subunit alpha.